We begin with the raw amino-acid sequence, 92 residues long: Putative septation protein SpoVG (92 aa).

It belongs to the SpoVG family.

Functionally, could be involved in septation. The sequence is that of Putative septation protein SpoVG from Clostridioides difficile (strain 630) (Peptoclostridium difficile).